A 519-amino-acid polypeptide reads, in one-letter code: Protein twist (519 aa).

4 disordered regions span residues 53-77 (MQQQ…QQQY), 131-156 (NFEQ…VATA), 301-321 (YEAY…SDRD), and 368-389 (FRKP…DEFS). Composition is skewed to low complexity over residues 54-76 (QQQQ…QQQQ) and 134-146 (QQQQ…QQQQ). The span at 308–317 (NSLNGSTYSS) shows a compositional bias: polar residues. Over residues 368-379 (FRKPRRRLKRKP) the composition is skewed to basic residues. The region spanning 390-441 (NQRVMANVRERQRTQSLNDAFKALQQIIPTLPSDKLSKIQTLKLATRYIDFL) is the bHLH domain.

In terms of assembly, efficient DNA binding requires dimerization with another bHLH protein. Homodimer.

The protein resides in the nucleus. Involved in the establishment and dorsoventral patterning of germ layers in the embryo. The protein is Protein twist of Drosophila virilis (Fruit fly).